The primary structure comprises 205 residues: Small ribosomal subunit protein uS4 (205 aa).

The region spanning 91–149 is the S4 RNA-binding domain; that stretch reads MRLDALVLRAAFARSISQARQLVVHRHILVDGKLVDRPSYSVSPGQTVKVKPKSVPLDP.

The protein belongs to the universal ribosomal protein uS4 family. Part of the 30S ribosomal subunit. Contacts protein S5. The interaction surface between S4 and S5 is involved in control of translational fidelity.

Functionally, one of the primary rRNA binding proteins, it binds directly to 16S rRNA where it nucleates assembly of the body of the 30S subunit. In terms of biological role, with S5 and S12 plays an important role in translational accuracy. In Tropheryma whipplei (strain TW08/27) (Whipple's bacillus), this protein is Small ribosomal subunit protein uS4.